The primary structure comprises 2290 residues: Protein Ycf2 (2290 aa).

ATP is bound at residue 1644-1651 (GSIGTGRS).

This sequence belongs to the Ycf2 family.

The protein resides in the plastid. The protein localises to the chloroplast stroma. Functionally, probable ATPase of unknown function. Its presence in a non-photosynthetic plant (Epifagus virginiana) and experiments in tobacco indicate that it has an essential function which is probably not related to photosynthesis. This Barbarea verna (Land cress) protein is Protein Ycf2.